The sequence spans 105 residues: MIKYVLISALLVVAVYSFTIEDSEDALLEEAEDELDTEEERRMALPPGAVCNGHKSDCQCFGAKYKCSCPFLWRFRRSAKCHCKKGWAWTAIKKRSCHNRYQWSG.

The signal sequence occupies residues 1–17 (MIKYVLISALLVVAVYS). A propeptide spanning residues 18–41 (FTIEDSEDALLEEAEDELDTEEER) is cleaved from the precursor. Disulfide bonds link Cys51–Cys67, Cys58–Cys97, Cys60–Cys83, and Cys69–Cys81.

This sequence belongs to the neurotoxin 04 (omega-agtx) family. 01 (type I omega-agtx) subfamily. As to expression, expressed by the venom gland.

Its subcellular location is the secreted. Functionally, insecticidal to house crickets. It induces an excitatory slow-onset impact that leads to irreversible spastic paralysis. It also modifies human voltage-gated potassium channel Kv1.5/KCNA5. Most likely, it binds to the voltage-sensing domain of the channel, suggesting it does not block the pore but prevents its opening at physiological membrane potentials. The recombinant peptide binds to the channel in an irreversible manner and slows down the hKv1.5 current activation kinetics. It is not toxic to mice, when intracranially injected (at 0.5 ug/g mouse). The sequence is that of U2-lycotoxin-Ls1c from Lycosa singoriensis (Wolf spider).